The primary structure comprises 440 residues: Argininosuccinate lyase (440 aa).

Belongs to the lyase 1 family. Argininosuccinate lyase subfamily.

It is found in the cytoplasm. The enzyme catalyses 2-(N(omega)-L-arginino)succinate = fumarate + L-arginine. The protein operates within amino-acid biosynthesis; L-arginine biosynthesis; L-arginine from L-ornithine and carbamoyl phosphate: step 3/3. The protein is Argininosuccinate lyase of Clostridium botulinum (strain 657 / Type Ba4).